Reading from the N-terminus, the 374-residue chain is Serine/threonine-protein kinase-transforming protein mos (374 aa).

Residues 94-370 (VCLMHRLGSG…LLQRDLKAFR (277 aa)) enclose the Protein kinase domain. Residues 100-108 (LGSGGFGSV) and Lys-121 contribute to the ATP site. Asp-229 serves as the catalytic Proton acceptor.

Belongs to the protein kinase superfamily. Ser/Thr protein kinase family.

The enzyme catalyses L-seryl-[protein] + ATP = O-phospho-L-seryl-[protein] + ADP + H(+). It catalyses the reaction L-threonyl-[protein] + ATP = O-phospho-L-threonyl-[protein] + ADP + H(+). This is Serine/threonine-protein kinase-transforming protein mos (V-MOS) from Mus musculus (Mouse).